Here is a 254-residue protein sequence, read N- to C-terminus: Alcohol dehydrogenase 2 (254 aa).

Residue Phe-10–Leu-33 coordinates NAD(+). Ser-138 is a binding site for substrate. Catalysis depends on Tyr-151, which acts as the Proton acceptor.

This sequence belongs to the short-chain dehydrogenases/reductases (SDR) family. Homodimer.

The enzyme catalyses a primary alcohol + NAD(+) = an aldehyde + NADH + H(+). The catalysed reaction is a secondary alcohol + NAD(+) = a ketone + NADH + H(+). This Drosophila mulleri (Fruit fly) protein is Alcohol dehydrogenase 2 (Adh2).